Consider the following 110-residue polypeptide: MHVKTGDEVLIITGKDRGKRGKIKESRPKEQRVIVEGLNIVKRHMKPRGPTRPGGIIEMEAPIHVSNVMLICPKCGRASRTGHRFLEETDHKGRPKKVRYCKACDAVIDE.

Belongs to the universal ribosomal protein uL24 family. In terms of assembly, part of the 50S ribosomal subunit.

In terms of biological role, one of two assembly initiator proteins, it binds directly to the 5'-end of the 23S rRNA, where it nucleates assembly of the 50S subunit. One of the proteins that surrounds the polypeptide exit tunnel on the outside of the subunit. In Roseiflexus castenholzii (strain DSM 13941 / HLO8), this protein is Large ribosomal subunit protein uL24.